A 92-amino-acid polypeptide reads, in one-letter code: Large ribosomal subunit protein eL43 (92 aa).

The C4-type zinc-finger motif lies at cysteine 39 to cysteine 60.

It belongs to the eukaryotic ribosomal protein eL43 family.

The sequence is that of Large ribosomal subunit protein eL43 (RPL43) from Eremothecium gossypii (strain ATCC 10895 / CBS 109.51 / FGSC 9923 / NRRL Y-1056) (Yeast).